We begin with the raw amino-acid sequence, 292 residues long: Ventral anterior homeobox 2 (292 aa).

Positions 1 to 36 are enriched in basic and acidic residues; that stretch reads MGDGGAERDRGPKRREEPGGRSGRHGEHRGAEDLRA. Positions 1–74 are disordered; that stretch reads MGDGGAERDR…DGQQALGETD (74 aa). A DNA-binding region (homeobox) is located at residues 102–161; sequence PKRTRTSFTAEQLYRLEMEFQRCQYVVGRERTELARQLNLSETQVKVWFQNRRTKQKKDQ. The interval 207-242 is disordered; the sequence is LPGLPASHRGTSLVDPRNSSPRLNPMPSASASSPLP.

This sequence belongs to the EMX homeobox family. Expressed in the developing and mature retina.

The protein localises to the nucleus. Functionally, transcription factor that may function in dorsoventral specification of the forebrain. Regulates the expression of Wnt signaling antagonists including the expression of a truncated TCF7L2 isoform that cannot bind CTNNB1 and acts therefore as a potent dominant-negative Wnt antagonist. Plays a crucial role in eye development and, in particular, in the specification of the ventral optic vesicle. May be a regulator of axial polarization in the retina. This is Ventral anterior homeobox 2 (Vax2) from Mus musculus (Mouse).